The following is a 354-amino-acid chain: NADPH dehydrogenase (354 aa).

FMN is bound by residues serine 23, proline 24, cysteine 26, alanine 58, and glutamine 100. Catalysis depends on tyrosine 182, which acts as the Proton donor. FMN is bound by residues arginine 230, leucine 301, glycine 323, and arginine 324.

This sequence belongs to the NADH:flavin oxidoreductase/NADH oxidase family. NamA subfamily. As to quaternary structure, homodimer. Behaves as an active monomer in solution while in the crystal packing assembles following the classical dimeric architecture of other thermophilic-like ene-reductases. The cofactor is FMN.

The catalysed reaction is A + NADPH + H(+) = AH2 + NADP(+). Functionally, ene-reductase that catalyzes the stereoselective reduction of activated C-C double bonds. Shows very good activity with 4-ketoisophorone, 2-cyclohexen-1-one and 1-octen-3-one, and low activity with maleimide, 2-methyl-pentenal, 2-methyl-cyclohexen-1-one, 2-cyclopenten-1-one and trans-2-hexen-1-al. Shows the highest catalytic efficiency with ketoisophorone. Exhibits a restricted substrate spectrum with generally lower activities compared to other ene-reductases. This Chloroflexus aggregans (strain MD-66 / DSM 9485) protein is NADPH dehydrogenase.